The primary structure comprises 343 residues: MAGNCSWEAHSTNQNKMCPGMSEARELYSRGFLTIEQIATLPPPAVTNYIFLLLCLCGLVGNGLVLWFFGFSIKRTPFSIYFLHLASADGMYLFSKAVIALLNMGTFLGSFPDYIRRVSRIVGLCTFFTGVSLLPAISIERCVSVIFPTWYWRRRPKRLSAGVCALLWMLSFLVTSIHNYFCMFLGHEAPGTVCRNMDIALGILLFFLFCPLMVLPCLALILHVECRARRRQRSAKLNHVVLAIVSVFLVSSIYLGIDWFLFWVFQIPAPFPEYVTDLCICINSSAKPIVYFLAGRDKSQRLWEPLRVVFQRALRDGAEPGDAASSTPNTVTMEMQCPSGNAS.

Residues 1 to 44 (MAGNCSWEAHSTNQNKMCPGMSEARELYSRGFLTIEQIATLPPP) are Extracellular-facing. Residue N4 is glycosylated (N-linked (GlcNAc...) asparagine). A helical transmembrane segment spans residues 45–66 (AVTNYIFLLLCLCGLVGNGLVL). The Cytoplasmic portion of the chain corresponds to 67–82 (WFFGFSIKRTPFSIYF). The chain crosses the membrane as a helical span at residues 83 to 104 (LHLASADGMYLFSKAVIALLNM). Over 105 to 123 (GTFLGSFPDYIRRVSRIVG) the chain is Extracellular. The helical transmembrane segment at 124 to 144 (LCTFFTGVSLLPAISIERCVS) threads the bilayer. Residues 145-160 (VIFPTWYWRRRPKRLS) lie on the Cytoplasmic side of the membrane. Residues 161-181 (AGVCALLWMLSFLVTSIHNYF) form a helical membrane-spanning segment. At 182 to 198 (CMFLGHEAPGTVCRNMD) the chain is on the extracellular side. Residues 199-220 (IALGILLFFLFCPLMVLPCLAL) form a helical membrane-spanning segment. At 221–241 (ILHVECRARRRQRSAKLNHVV) the chain is on the cytoplasmic side. The helical transmembrane segment at 242 to 263 (LAIVSVFLVSSIYLGIDWFLFW) threads the bilayer. Residues 264-273 (VFQIPAPFPE) lie on the Extracellular side of the membrane. Residues 274-294 (YVTDLCICINSSAKPIVYFLA) traverse the membrane as a helical segment. Topologically, residues 295 to 343 (GRDKSQRLWEPLRVVFQRALRDGAEPGDAASSTPNTVTMEMQCPSGNAS) are cytoplasmic. Residues 318-343 (AEPGDAASSTPNTVTMEMQCPSGNAS) are disordered. Over residues 324 to 343 (ASSTPNTVTMEMQCPSGNAS) the composition is skewed to polar residues.

Belongs to the G-protein coupled receptor 1 family. Mas subfamily.

It is found in the cell membrane. Its function is as follows. Orphan receptor. May bind to a neuropeptide and may regulate nociceptor function and/or development, including the sensation or modulation of pain. In Mus musculus (Mouse), this protein is Mas-related G-protein coupled receptor member F (Mrgprf).